The sequence spans 892 residues: DNA mismatch repair protein MutS (892 aa).

Position 607–614 (607–614) interacts with ATP; it reads GPNMSGKS.

Belongs to the DNA mismatch repair MutS family.

This protein is involved in the repair of mismatches in DNA. It is possible that it carries out the mismatch recognition step. This protein has a weak ATPase activity. The protein is DNA mismatch repair protein MutS of Bacillus cereus (strain AH820).